We begin with the raw amino-acid sequence, 481 residues long: Velvet complex subunit B (481 aa).

Disordered regions lie at residues 1-157 and 241-339; these read MNSA…YSKI and GTGA…NGYG. Composition is skewed to pro residues over residues 36 to 45, 53 to 62, and 96 to 112; these read HPPPPLPPPS, PPLPPPPSAP, and PYAP…QYPR. The 305-residue stretch at 160-464 folds into the Velvet domain; sequence GSGWKYSLDV…ANQGIKIPIR (305 aa). Composition is skewed to low complexity over residues 241 to 255 and 293 to 325; these read GTGA…TYSS and QQSY…SAEP.

It belongs to the velvet family. VelB subfamily. As to quaternary structure, component of the heterotrimeric velvet complex composed of laeA, veA and velB; VeA acting as a bridging protein between laeA and velB. Forms a heterodimeric complex with vosA; the formation of the velB-vosA complex is light-dependent.

The protein resides in the nucleus. It localises to the cytoplasm. Component of the velvet transcription factor complex that controls sexual/asexual developmental ratio in response to light, promoting sexual development in the darkness while stimulating asexual sporulation under illumination. The velvet complex acts as a global regulator for secondary metabolite gene expression. Component of the velB-VosA heterodimeric complex that plays a dual role in activating genes associated with spore maturation and repressing certain development-associated genes. The velB-VosA complex binds DNA through the DNA-binding domain of vosA that recognizes an 11-nucleotide consensus sequence 5'-CTGGCCGCGGC-3' consisting of two motifs in the promoters of key developmental regulatory genes. Controls the biosynthetic gene cluster for beauvericin, a depsipeptide mycotoxin that functions as a virulence determinant. Also regulates chromatin structure and transcription of siderophore biosynthetic genes and is required for infection of tomato plants. This Fusarium oxysporum f. sp. lycopersici (strain 4287 / CBS 123668 / FGSC 9935 / NRRL 34936) (Fusarium vascular wilt of tomato) protein is Velvet complex subunit B.